We begin with the raw amino-acid sequence, 126 residues long: Desulfoferrodoxin (126 aa).

9 residues coordinate Fe cation: Cys10, Cys13, Cys29, Cys30, His49, His69, His75, Cys116, and His119.

It belongs to the desulfoferrodoxin family. As to quaternary structure, homodimer. The cofactor is Fe(3+). Requires Cu(2+) as cofactor.

It catalyses the reaction reduced [rubredoxin] + superoxide + 2 H(+) = oxidized [rubredoxin] + H2O2. In terms of biological role, catalyzes the one-electron reduction of superoxide anion radical to hydrogen peroxide at a nonheme ferrous iron center. Plays a fundamental role in case of oxidative stress via its superoxide detoxification activity. The chain is Desulfoferrodoxin (dfx) from Nitratidesulfovibrio vulgaris (strain ATCC 29579 / DSM 644 / CCUG 34227 / NCIMB 8303 / VKM B-1760 / Hildenborough) (Desulfovibrio vulgaris).